Consider the following 470-residue polypeptide: V-type ATP synthase beta chain (470 aa).

Belongs to the ATPase alpha/beta chains family.

Produces ATP from ADP in the presence of a proton gradient across the membrane. The V-type beta chain is a regulatory subunit. This is V-type ATP synthase beta chain from Deinococcus geothermalis (strain DSM 11300 / CIP 105573 / AG-3a).